The chain runs to 50 residues: Conotoxin Cal6.19 (50 aa).

The first 22 residues, 1-22 (MKVTCVLVLTLMALTVCQVATA), serve as a signal peptide directing secretion. 3 cysteine pairs are disulfide-bonded: Cys-24–Cys-37, Cys-30–Cys-41, and Cys-36–Cys-46.

Expressed by the venom duct.

It is found in the secreted. Its function is as follows. Probable neurotoxin. This Californiconus californicus (California cone) protein is Conotoxin Cal6.19.